The following is a 108-amino-acid chain: Nucleoid-associated protein Pmen_2646 (108 aa).

The interval 1–25 (MMKGGMAGLMKQAQQMQEKMQKMQE) is disordered.

This sequence belongs to the YbaB/EbfC family. As to quaternary structure, homodimer.

It is found in the cytoplasm. The protein localises to the nucleoid. Functionally, binds to DNA and alters its conformation. May be involved in regulation of gene expression, nucleoid organization and DNA protection. The protein is Nucleoid-associated protein Pmen_2646 of Ectopseudomonas mendocina (strain ymp) (Pseudomonas mendocina).